The sequence spans 215 residues: Cytochrome b6 (215 aa).

Residues 32 to 52 (IFHCLGGITLTCFLVQVATGF) traverse the membrane as a helical segment. Cys35 is a binding site for heme c. 2 residues coordinate heme b: His86 and His100. 3 consecutive transmembrane segments (helical) span residues 90–110 (ASMMVLMMILHVFRVYLTGGF), 116–136 (LTWVTGVVLAVLTASFGVTGY), and 186–206 (LHTFVLPLLTAVFMLMHFPMI). Residues His187 and His202 each contribute to the heme b site.

The protein belongs to the cytochrome b family. PetB subfamily. As to quaternary structure, the 4 large subunits of the cytochrome b6-f complex are cytochrome b6, subunit IV (17 kDa polypeptide, PetD), cytochrome f and the Rieske protein, while the 4 small subunits are PetG, PetL, PetM and PetN. The complex functions as a dimer. It depends on heme b as a cofactor. Heme c is required as a cofactor.

The protein localises to the plastid. It is found in the chloroplast thylakoid membrane. In terms of biological role, component of the cytochrome b6-f complex, which mediates electron transfer between photosystem II (PSII) and photosystem I (PSI), cyclic electron flow around PSI, and state transitions. This chain is Cytochrome b6, found in Amborella trichopoda.